A 157-amino-acid polypeptide reads, in one-letter code: Pyruvoyl-dependent arginine decarboxylase (157 aa).

Position 44 is a pyruvic acid (Ser) (Ser-44).

This sequence belongs to the PdaD family. It depends on pyruvate as a cofactor.

It catalyses the reaction L-arginine + H(+) = agmatine + CO2. The sequence is that of Pyruvoyl-dependent arginine decarboxylase from Thermococcus kodakarensis (strain ATCC BAA-918 / JCM 12380 / KOD1) (Pyrococcus kodakaraensis (strain KOD1)).